Here is a 939-residue protein sequence, read N- to C-terminus: Isoleucine--tRNA ligase (939 aa).

The 'HIGH' region signature appears at 58 to 68; the sequence is PYANGDIHIGH. Residue E574 coordinates L-isoleucyl-5'-AMP. The short motif at 615–619 is the 'KMSKS' region element; sequence KMSKS. K618 provides a ligand contact to ATP. Residues C902, C905, C922, and C925 each coordinate Zn(2+).

Belongs to the class-I aminoacyl-tRNA synthetase family. IleS type 1 subfamily. In terms of assembly, monomer. Zn(2+) serves as cofactor.

The protein localises to the cytoplasm. It carries out the reaction tRNA(Ile) + L-isoleucine + ATP = L-isoleucyl-tRNA(Ile) + AMP + diphosphate. Catalyzes the attachment of isoleucine to tRNA(Ile). As IleRS can inadvertently accommodate and process structurally similar amino acids such as valine, to avoid such errors it has two additional distinct tRNA(Ile)-dependent editing activities. One activity is designated as 'pretransfer' editing and involves the hydrolysis of activated Val-AMP. The other activity is designated 'posttransfer' editing and involves deacylation of mischarged Val-tRNA(Ile). This is Isoleucine--tRNA ligase from Aromatoleum aromaticum (strain DSM 19018 / LMG 30748 / EbN1) (Azoarcus sp. (strain EbN1)).